A 156-amino-acid chain; its full sequence is Large ribosomal subunit protein uL22 (156 aa).

Belongs to the universal ribosomal protein uL22 family. As to quaternary structure, part of the 50S ribosomal subunit.

This protein binds specifically to 23S rRNA. It makes multiple contacts with different domains of the 23S rRNA in the assembled 50S subunit and ribosome. Its function is as follows. The globular domain of the protein is located near the polypeptide exit tunnel on the outside of the subunit, while an extended beta-hairpin is found that lines the wall of the exit tunnel in the center of the 70S ribosome. The polypeptide is Large ribosomal subunit protein uL22 (Hyperthermus butylicus (strain DSM 5456 / JCM 9403 / PLM1-5)).